Reading from the N-terminus, the 246-residue chain is Phosphomannomutase 2 (246 aa).

Residue A2 is modified to N-acetylalanine. D12 (nucleophile) is an active-site residue. Mg(2+) contacts are provided by D12 and D14. The Proton donor/acceptor role is filled by D14. R21, R123, R134, and R141 together coordinate alpha-D-mannose 1-phosphate. The residue at position 149 (K149) is an N6-acetyllysine. Residues S179 and D181 each contribute to the alpha-D-mannose 1-phosphate site. Positions 209, 221, 223, and 226 each coordinate Mg(2+).

It belongs to the eukaryotic PMM family. In terms of assembly, homodimer.

It localises to the cytoplasm. The enzyme catalyses alpha-D-mannose 1-phosphate = D-mannose 6-phosphate. It functions in the pathway nucleotide-sugar biosynthesis; GDP-alpha-D-mannose biosynthesis; alpha-D-mannose 1-phosphate from D-fructose 6-phosphate: step 2/2. Involved in the synthesis of the GDP-mannose and dolichol-phosphate-mannose required for a number of critical mannosyl transfer reactions. In Homo sapiens (Human), this protein is Phosphomannomutase 2 (PMM2).